Here is a 635-residue protein sequence, read N- to C-terminus: BTB/POZ domain and ankyrin repeat-containing protein NPR2 (635 aa).

The BTB domain occupies 97–191 (SDADVDVADG…LYTGKLRPAP (95 aa)). Residues 138-152 (AAGGGGGGGGGGGER) show a composition bias toward gly residues. Residues 138-157 (AAGGGGGGGGGGGERTGGRP) are disordered. A C2HC NPR-type zinc finger spans residues 194–208 (VVSCADPMCPHDSCP). Residues Cys-197, Cys-202, His-204, and Cys-207 each contribute to the Zn(2+) site. 3 ANK repeats span residues 317–347 (KRVR…TLDD), 349–376 (NALH…NLNL), and 380–409 (RGYT…AVSQ). The segment at 439 to 576 (ESNKDRLCID…FLEDDLPDSP (138 aa)) is salicylic acid-binding core (SBC). A salicylate-binding site is contributed by Arg-484.

It belongs to the plant 'ANKYRIN-BTB/POZ' family. 'NPR1-like' subfamily. Interacts with NRR. Interacts with TGAL1 and TGAL11.

The protein localises to the nucleus. Its pathway is protein modification; protein ubiquitination. Functionally, salicylic acid (SA)-binding substrate-specific adapter of an E3 ubiquitin-protein ligase complex (CUL3-RBX1-BTB) which mediates the ubiquitination and subsequent proteasomal degradation of target proteins. May be involved in regulating basal defense responses against pathogens, and may be involved in crosstalk between SA- and JA-dependent signaling pathways. Does not seem to be involved in defense response against the bacterial blight disease caused by Xanthomonas oryzae pv. oryzae (Xoo). Over-expression of NPR2/NH2 does not confer disease resistance to Xoo. The polypeptide is BTB/POZ domain and ankyrin repeat-containing protein NPR2 (Oryza sativa subsp. japonica (Rice)).